The following is a 547-amino-acid chain: CTP synthase (547 aa).

An amidoligase domain region spans residues 1–265; the sequence is MARFIFITGG…DQAVLDAFQI (265 aa). S13 contributes to the CTP binding site. S13 contacts UTP. ATP contacts are provided by residues 14–19 and D71; that span reads SLGKGL. Residues D71 and E139 each contribute to the Mg(2+) site. CTP-binding positions include 146 to 148, 186 to 191, and K222; these read DIE and KTKPTQ. UTP is bound by residues 186-191 and K222; that span reads KTKPTQ. One can recognise a Glutamine amidotransferase type-1 domain in the interval 291–546; that stretch reads KIAIVGKYVQ…VRAAKESSRL (256 aa). L-glutamine is bound at residue G353. The active-site Nucleophile; for glutamine hydrolysis is the C380. L-glutamine is bound by residues 381 to 384, E404, and R474; that span reads LGMQ. Residues H519 and E521 contribute to the active site.

This sequence belongs to the CTP synthase family. As to quaternary structure, homotetramer.

It catalyses the reaction UTP + L-glutamine + ATP + H2O = CTP + L-glutamate + ADP + phosphate + 2 H(+). It carries out the reaction L-glutamine + H2O = L-glutamate + NH4(+). The enzyme catalyses UTP + NH4(+) + ATP = CTP + ADP + phosphate + 2 H(+). The protein operates within pyrimidine metabolism; CTP biosynthesis via de novo pathway; CTP from UDP: step 2/2. With respect to regulation, allosterically activated by GTP, when glutamine is the substrate; GTP has no effect on the reaction when ammonia is the substrate. The allosteric effector GTP functions by stabilizing the protein conformation that binds the tetrahedral intermediate(s) formed during glutamine hydrolysis. Inhibited by the product CTP, via allosteric rather than competitive inhibition. Functionally, catalyzes the ATP-dependent amination of UTP to CTP with either L-glutamine or ammonia as the source of nitrogen. Regulates intracellular CTP levels through interactions with the four ribonucleotide triphosphates. In Ruegeria pomeroyi (strain ATCC 700808 / DSM 15171 / DSS-3) (Silicibacter pomeroyi), this protein is CTP synthase.